Reading from the N-terminus, the 147-residue chain is Hemoglobin subunit rho (147 aa).

In terms of domain architecture, Globin spans 3–147; that stretch reads HWSAEEKQLI…VAHALAYKYH (145 aa). Heme b contacts are provided by histidine 64 and histidine 93.

Belongs to the globin family.

Its function is as follows. The rho chain is the major early embryonic beta-type hemoglobin chain. In Gallus gallus (Chicken), this protein is Hemoglobin subunit rho.